The following is a 154-amino-acid chain: Large ribosomal subunit protein uL13 (154 aa).

It belongs to the universal ribosomal protein uL13 family. In terms of assembly, part of the 50S ribosomal subunit.

In terms of biological role, this protein is one of the early assembly proteins of the 50S ribosomal subunit, although it is not seen to bind rRNA by itself. It is important during the early stages of 50S assembly. This Rhodospirillum rubrum (strain ATCC 11170 / ATH 1.1.1 / DSM 467 / LMG 4362 / NCIMB 8255 / S1) protein is Large ribosomal subunit protein uL13.